A 362-amino-acid polypeptide reads, in one-letter code: Class I histocompatibility antigen, Gogo-B*0102 alpha chain (362 aa).

Positions 1–24 are cleaved as a signal peptide; it reads MRVTAPRTLLLLLSAALALTETWA. Residues 25 to 114 form an alpha-1 region; it reads GSHSMRYFDT…ALRYYNQSEA (90 aa). Over 25–308 the chain is Extracellular; the sequence is GSHSMRYFDT…EPSSQSTIPI (284 aa). N110 is a glycosylation site (N-linked (GlcNAc...) asparagine). Residues 115 to 206 form an alpha-2 region; that stretch reads GSHTFQRMFG…ENGRETLQRA (92 aa). 2 disulfide bridges follow: C125–C188 and C227–C283. An alpha-3 region spans residues 207–298; that stretch reads DTPKTHVTHH…GLPKPLTLRW (92 aa). Residues 209 to 295 enclose the Ig-like C1-type domain; that stretch reads PKTHVTHHPI…QHEGLPKPLT (87 aa). Residues 299–308 form a connecting peptide region; that stretch reads EPSSQSTIPI. Residues 309–332 traverse the membrane as a helical segment; that stretch reads VGIVAGLAVLAVVVIGAVVTAVIC. Topologically, residues 333-362 are cytoplasmic; the sequence is RRKSSGGKGGSYSQAASSDSAQGSDVSLTA. Residues 335–362 form a disordered region; sequence KSSGGKGGSYSQAASSDSAQGSDVSLTA. Low complexity predominate over residues 343–362; that stretch reads SYSQAASSDSAQGSDVSLTA.

It belongs to the MHC class I family. In terms of assembly, heterodimer of an alpha chain and a beta chain (beta-2-microglobulin).

The protein resides in the membrane. Its function is as follows. Involved in the presentation of foreign antigens to the immune system. The sequence is that of Class I histocompatibility antigen, Gogo-B*0102 alpha chain from Gorilla gorilla gorilla (Western lowland gorilla).